The chain runs to 351 residues: Autoinducer 2 import system permease protein LsrC (351 aa).

The next 9 helical transmembrane spans lie at 14–34 (LLAI…YFSL), 39–59 (MIFS…LVML), 70–90 (ITGL…GLAA), 93–113 (LFAL…VTWL), 115–135 (IPAI…MLLL), 155–175 (ILFS…AMAW), 213–233 (MNGV…GFIP), 252–272 (GISL…AFLL), and 284–304 (LPAW…LVFD).

It belongs to the binding-protein-dependent transport system permease family. AraH/RbsC subfamily. As to quaternary structure, the complex is composed of two ATP-binding proteins (LsrA), two transmembrane proteins (LsrC and LsrD) and a solute-binding protein (LsrB).

It localises to the cell inner membrane. In terms of biological role, part of the ABC transporter complex LsrABCD involved in autoinducer 2 (AI-2) import. Probably responsible for the translocation of the substrate across the membrane. The polypeptide is Autoinducer 2 import system permease protein LsrC (lsrC) (Yersinia pseudotuberculosis serotype O:1b (strain IP 31758)).